We begin with the raw amino-acid sequence, 216 residues long: MSLPMLQVALDNQTMDSAYETTRLIAEEVDIIEVGTILCVGEGVRAVRDLKALYPHKIVLADAKIADAGKILSRMCFEANADWVTVICCADINTAKGALDVAKEFNGDVQIELTGYWTWEQAQQWRDAGIQQVVYHRSRDAQAAGVAWGEADITAIKRLSDMGFKVTVTGGLVLEDLPLFKGIPIHVFIAGRSIRDAASPVEAARQFKRSIAELWG.

D11 provides a ligand contact to substrate. The Mg(2+) site is built by E33 and D62. R192 is a substrate binding site.

This sequence belongs to the HPS/KGPDC family. KGPDC subfamily. Homodimer. Mg(2+) serves as cofactor.

It catalyses the reaction 3-dehydro-L-gulonate 6-phosphate + H(+) = L-xylulose 5-phosphate + CO2. The protein operates within cofactor degradation; L-ascorbate degradation; D-xylulose 5-phosphate from L-ascorbate: step 2/4. Its function is as follows. Catalyzes the decarboxylation of 3-keto-L-gulonate-6-P into L-xylulose-5-P. Is involved in the anaerobic L-ascorbate utilization. The polypeptide is 3-keto-L-gulonate-6-phosphate decarboxylase UlaD (Shigella boydii serotype 18 (strain CDC 3083-94 / BS512)).